An 87-amino-acid chain; its full sequence is Defensin-like protein 100 (87 aa).

The signal sequence occupies residues 1–29 (MRSLRLRTVVVATIVVCLSVLLSPTEVDG). 4 disulfides stabilise this stretch: Cys31-Cys79, Cys38-Cys64, Cys44-Cys76, and Cys48-Cys78.

The protein belongs to the DEFL family.

The protein localises to the secreted. In Arabidopsis thaliana (Mouse-ear cress), this protein is Defensin-like protein 100.